Here is an 822-residue protein sequence, read N- to C-terminus: Valine--tRNA ligase (822 aa).

Positions 41-51 (PNVTGQLHLGH) match the 'HIGH' region motif. The short motif at 511–515 (KMSKS) is the 'KMSKS' region element. Lys-514 contacts ATP. Residues 765 to 822 (EQKGRELKEIQFLKSEILRAEKILTNKGFLEKAPREKIDLERTKLEKLKEKLAFYEKK) are a coiled coil.

Belongs to the class-I aminoacyl-tRNA synthetase family. ValS type 1 subfamily. As to quaternary structure, monomer.

The protein localises to the cytoplasm. The enzyme catalyses tRNA(Val) + L-valine + ATP = L-valyl-tRNA(Val) + AMP + diphosphate. Functionally, catalyzes the attachment of valine to tRNA(Val). As ValRS can inadvertently accommodate and process structurally similar amino acids such as threonine, to avoid such errors, it has a 'posttransfer' editing activity that hydrolyzes mischarged Thr-tRNA(Val) in a tRNA-dependent manner. This is Valine--tRNA ligase from Mesomycoplasma hyopneumoniae (strain 232) (Mycoplasma hyopneumoniae).